We begin with the raw amino-acid sequence, 276 residues long: Rhomboid protease GlpG (276 aa).

The next 6 membrane-spanning stretches (helical) occupy residues 94 to 114 (GPVT…MSLI), 142 to 162 (IFMH…WYLG), 169 to 189 (LGSG…GYVQ), 192 to 212 (FSGP…GYVW), 229 to 249 (LIIF…GMSM), and 250 to 270 (ANGA…VDTL). Residue S201 is the Nucleophile of the active site. Residue H254 is part of the active site.

It belongs to the peptidase S54 family.

The protein resides in the cell inner membrane. It carries out the reaction Cleaves type-1 transmembrane domains using a catalytic dyad composed of serine and histidine that are contributed by different transmembrane domains.. Its function is as follows. Rhomboid-type serine protease that catalyzes intramembrane proteolysis. This is Rhomboid protease GlpG from Salmonella choleraesuis (strain SC-B67).